Here is a 367-residue protein sequence, read N- to C-terminus: tRNA-specific 2-thiouridylase MnmA (367 aa).

Residues 6 to 13 and Met32 each bind ATP; that span reads AMSGGVDS. The active-site Nucleophile is Cys101. Cys101 and Cys193 are disulfide-bonded. Gly125 serves as a coordination point for ATP. The tract at residues 143 to 145 is interaction with tRNA; the sequence is KDQ. Cys193 functions as the Cysteine persulfide intermediate in the catalytic mechanism.

It belongs to the MnmA/TRMU family.

The protein resides in the cytoplasm. The enzyme catalyses S-sulfanyl-L-cysteinyl-[protein] + uridine(34) in tRNA + AH2 + ATP = 2-thiouridine(34) in tRNA + L-cysteinyl-[protein] + A + AMP + diphosphate + H(+). Functionally, catalyzes the 2-thiolation of uridine at the wobble position (U34) of tRNA, leading to the formation of s(2)U34. This is tRNA-specific 2-thiouridylase MnmA from Mycobacterium tuberculosis (strain CDC 1551 / Oshkosh).